We begin with the raw amino-acid sequence, 451 residues long: Phosphoglucosamine mutase (451 aa).

Serine 107 serves as the catalytic Phosphoserine intermediate. Mg(2+) contacts are provided by serine 107, aspartate 246, aspartate 248, and aspartate 250. Position 107 is a phosphoserine (serine 107).

It belongs to the phosphohexose mutase family. It depends on Mg(2+) as a cofactor. In terms of processing, activated by phosphorylation.

It catalyses the reaction alpha-D-glucosamine 1-phosphate = D-glucosamine 6-phosphate. In terms of biological role, catalyzes the conversion of glucosamine-6-phosphate to glucosamine-1-phosphate. In Burkholderia lata (strain ATCC 17760 / DSM 23089 / LMG 22485 / NCIMB 9086 / R18194 / 383), this protein is Phosphoglucosamine mutase.